The following is a 180-amino-acid chain: Protein GrpE (180 aa).

Positions 1–19 are enriched in basic and acidic residues; the sequence is MAEKKRAQEQEKVQEDQKM. A disordered region spans residues 1–25; it reads MAEKKRAQEQEKVQEDQKMQNEQNE.

This sequence belongs to the GrpE family. As to quaternary structure, homodimer.

The protein resides in the cytoplasm. Participates actively in the response to hyperosmotic and heat shock by preventing the aggregation of stress-denatured proteins, in association with DnaK and GrpE. It is the nucleotide exchange factor for DnaK and may function as a thermosensor. Unfolded proteins bind initially to DnaJ; upon interaction with the DnaJ-bound protein, DnaK hydrolyzes its bound ATP, resulting in the formation of a stable complex. GrpE releases ADP from DnaK; ATP binding to DnaK triggers the release of the substrate protein, thus completing the reaction cycle. Several rounds of ATP-dependent interactions between DnaJ, DnaK and GrpE are required for fully efficient folding. This is Protein GrpE from Nitratiruptor sp. (strain SB155-2).